Here is a 115-residue protein sequence, read N- to C-terminus: MPKANNAVASKARRKRVLKKAKGFWGSRGNILTVVKHAVDKAEQYAYRDRRVKKRTFRSLWIMRINAAARLNGTTYSRMINAMLKKNVEIDRKALAEIAVKDPAAFTVIVKSLFE.

It belongs to the bacterial ribosomal protein bL20 family.

Functionally, binds directly to 23S ribosomal RNA and is necessary for the in vitro assembly process of the 50S ribosomal subunit. It is not involved in the protein synthesizing functions of that subunit. The chain is Large ribosomal subunit protein bL20 from Pelodictyon phaeoclathratiforme (strain DSM 5477 / BU-1).